Consider the following 365-residue polypeptide: Eukaryotic translation initiation factor 3 subunit H (365 aa).

Residues V11 to F160 form the MPN domain.

It belongs to the eIF-3 subunit H family. Component of the eukaryotic translation initiation factor 3 (eIF-3) complex.

The protein resides in the cytoplasm. In terms of biological role, component of the eukaryotic translation initiation factor 3 (eIF-3) complex, which is involved in protein synthesis of a specialized repertoire of mRNAs and, together with other initiation factors, stimulates binding of mRNA and methionyl-tRNAi to the 40S ribosome. The eIF-3 complex specifically targets and initiates translation of a subset of mRNAs involved in cell proliferation. In Aspergillus niger (strain ATCC MYA-4892 / CBS 513.88 / FGSC A1513), this protein is Eukaryotic translation initiation factor 3 subunit H.